We begin with the raw amino-acid sequence, 222 residues long: Voltage-dependent calcium channel gamma-1 subunit (222 aa).

Topologically, residues 1–10 (MSPTEAPKVR) are cytoplasmic. A helical membrane pass occupies residues 11-29 (VTLFCILVGIVLAMTAVVS). The Extracellular portion of the chain corresponds to 30–108 (DHWAVLSPHM…TQKEYSISAA (79 aa)). N-linked (GlcNAc...) asparagine glycans are attached at residues asparagine 43 and asparagine 79. A disulfide bond links cysteine 57 and cysteine 80. A helical membrane pass occupies residues 109–129 (AISVFSLGFLIMGTICALMAF). The Cytoplasmic portion of the chain corresponds to 130-134 (RKKRD). Residues 135-155 (YLLRPASMFYVFAGLCLFVSL) traverse the membrane as a helical segment. Over 156–179 (EVMRQSVKRMIDSEDTVWIEYYYS) the chain is Extracellular. The helical transmembrane segment at 180-204 (WSFACACAAFVLLFLGGISLLLFSL) threads the bilayer. Residues 205–222 (PRMPQNPWESCMDAEPEH) lie on the Cytoplasmic side of the membrane.

This sequence belongs to the PMP-22/EMP/MP20 family. CACNG subfamily. As to quaternary structure, component of a calcium channel complex consisting of a pore-forming alpha subunit (CACNA1S) and the ancillary subunits CACNB1 or CACNB2, CACNG1 and CACNA2D1. The channel complex contains alpha, beta, gamma and delta subunits in a 1:1:1:1 ratio, i.e. it contains either CACNB1 or CACNB2. Post-translationally, N-glycosylated. Skeletal muscle (at protein level).

It is found in the cell membrane. It localises to the sarcolemma. Functionally, regulatory subunit of the voltage-gated calcium channel that gives rise to L-type calcium currents in skeletal muscle. Regulates channel inactivation kinetics. This Oryctolagus cuniculus (Rabbit) protein is Voltage-dependent calcium channel gamma-1 subunit (CACNG1).